Consider the following 197-residue polypeptide: Probable GTP-binding protein EngB (197 aa).

Residues 22 to 197 enclose the EngB-type G domain; that stretch reads TGVEVAFAGR…LKEKLDIWYQ (176 aa). Residues 30-37, 57-61, 75-78, 142-145, and 177-179 each bind GTP; these read GRSNAGKS, GRTQL, DLPG, TKAD, and FSS. The Mg(2+) site is built by Ser-37 and Thr-59.

This sequence belongs to the TRAFAC class TrmE-Era-EngA-EngB-Septin-like GTPase superfamily. EngB GTPase family. It depends on Mg(2+) as a cofactor.

Its function is as follows. Necessary for normal cell division and for the maintenance of normal septation. The sequence is that of Probable GTP-binding protein EngB from Francisella philomiragia subsp. philomiragia (strain ATCC 25017 / CCUG 19701 / FSC 153 / O#319-036).